The sequence spans 241 residues: Chromosome partition protein MukE (241 aa).

The disordered stretch occupies residues 207 to 241 (DGEAATPDSLSQEKSAVKNDEEIEDELDEGLGEEE). The span at 227-241 (EEIEDELDEGLGEEE) shows a compositional bias: acidic residues.

The protein belongs to the MukE family. Interacts, and probably forms a ternary complex, with MukF and MukB. The complex formation is stimulated by calcium or magnesium.

It localises to the cytoplasm. Its subcellular location is the nucleoid. Its function is as follows. Involved in chromosome condensation, segregation and cell cycle progression. May participate in facilitating chromosome segregation by condensation DNA from both sides of a centrally located replisome during cell division. Probably acts via its interaction with MukB and MukF. The sequence is that of Chromosome partition protein MukE from Mannheimia succiniciproducens (strain KCTC 0769BP / MBEL55E).